An 84-amino-acid chain; its full sequence is Putative membrane protein insertion efficiency factor (84 aa).

The protein belongs to the UPF0161 family.

It localises to the cell inner membrane. Could be involved in insertion of integral membrane proteins into the membrane. The sequence is that of Putative membrane protein insertion efficiency factor from Shewanella sp. (strain ANA-3).